Here is an 89-residue protein sequence, read N- to C-terminus: Small ribosomal subunit protein uS15 (89 aa).

The protein belongs to the universal ribosomal protein uS15 family. In terms of assembly, part of the 30S ribosomal subunit. Forms a bridge to the 50S subunit in the 70S ribosome, contacting the 23S rRNA.

Functionally, one of the primary rRNA binding proteins, it binds directly to 16S rRNA where it helps nucleate assembly of the platform of the 30S subunit by binding and bridging several RNA helices of the 16S rRNA. In terms of biological role, forms an intersubunit bridge (bridge B4) with the 23S rRNA of the 50S subunit in the ribosome. In Colwellia psychrerythraea (strain 34H / ATCC BAA-681) (Vibrio psychroerythus), this protein is Small ribosomal subunit protein uS15.